We begin with the raw amino-acid sequence, 279 residues long: Shikimate dehydrogenase (NADP(+)) (279 aa).

Residues 19 to 21 (SFS) and Thr66 each bind shikimate. The Proton acceptor role is filled by Lys70. Glu82 contributes to the NADP(+) binding site. Residues Asn91 and Asp106 each coordinate shikimate. NADP(+) is bound by residues 130–134 (GSGGA) and Leu222. Tyr224 contributes to the shikimate binding site. Gly245 contributes to the NADP(+) binding site.

This sequence belongs to the shikimate dehydrogenase family. As to quaternary structure, homodimer.

The catalysed reaction is shikimate + NADP(+) = 3-dehydroshikimate + NADPH + H(+). It participates in metabolic intermediate biosynthesis; chorismate biosynthesis; chorismate from D-erythrose 4-phosphate and phosphoenolpyruvate: step 4/7. In terms of biological role, involved in the biosynthesis of the chorismate, which leads to the biosynthesis of aromatic amino acids. Catalyzes the reversible NADPH linked reduction of 3-dehydroshikimate (DHSA) to yield shikimate (SA). This chain is Shikimate dehydrogenase (NADP(+)), found in Methanococcus maripaludis (strain C6 / ATCC BAA-1332).